A 44-amino-acid polypeptide reads, in one-letter code: Metallothionein-4 (44 aa).

The protein belongs to the metallothionein superfamily. Type 5 family.

This protein binds cations of several transition elements. Thought to be involved in metal ion homeostasis. The sequence is that of Metallothionein-4 (MtnD) from Drosophila melanogaster (Fruit fly).